A 409-amino-acid chain; its full sequence is Nucleoprotein (409 aa).

Disordered stretches follow at residues 1–32 (MASG…SSGN), 47–84 (PQPK…KSGR), 121–145 (ADTK…LRFS), and 164–194 (RSGR…GAED). Residues 29–160 (SSGNASWFQA…GNFRWDFIPL (132 aa)) are RNA-binding. In terms of domain architecture, CoV N NTD spans 31-156 (GNASWFQAIK…GGPDGNFRWD (126 aa)). Positions 57 to 68 (PDNNNIKPSQQH) are enriched in polar residues. The segment covering 70–84 (YWRRQARYKPGKSGR) has biased composition (basic residues). The segment covering 164–179 (RSGRSTAASSAASSRA) has biased composition (low complexity). Over residues 180-192 (PSREGSRGRRSGA) the composition is skewed to basic and acidic residues. Ser-190 is modified (phosphoserine; by host). The CoV N CTD domain occupies 215 to 331 (TKAKADEMAH…QCVDGVGTRP (117 aa)). The segment at 226–333 (RYCKRTIPPG…VDGVGTRPKD (108 aa)) is dimerization. Cys-320 and Cys-323 are oxidised to a cystine. The tract at residues 326–409 (GVGTRPKDDE…GDSALGENEL (84 aa)) is disordered. A compositionally biased stretch (basic residues) spans 358–367 (QRPKKEKKPK). The segment covering 368–384 (KQDDEVDKALTSDEERN) has biased composition (basic and acidic residues). Thr-378 is subject to Phosphothreonine; by host. The residue at position 379 (Ser-379) is a Phosphoserine; by host.

It belongs to the gammacoronavirus nucleocapsid protein family. As to quaternary structure, homooligomer. Both monomeric and oligomeric forms interact with RNA. Interacts with protein M. Interacts with NSP3; this interaction serves to tether the genome to the newly translated replicase-transcriptase complex at a very early stage of infection. In terms of processing, ADP-ribosylated. The ADP-ribosylation is retained in the virion during infection. Phosphorylated on serine and threonine residues.

Its subcellular location is the virion. The protein resides in the host endoplasmic reticulum-Golgi intermediate compartment. It is found in the host Golgi apparatus. Its function is as follows. Packages the positive strand viral genome RNA into a helical ribonucleocapsid (RNP) and plays a fundamental role during virion assembly through its interactions with the viral genome and membrane protein M. Plays an important role in enhancing the efficiency of subgenomic viral RNA transcription as well as viral replication. This chain is Nucleoprotein, found in Gallus gallus (Chicken).